Reading from the N-terminus, the 551-residue chain is Lysine--tRNA ligase (551 aa).

The 'HIGH' region signature appears at 54–62 (PSGLPHIGT). The 'KMSKS' region signature appears at 303-307 (KISKS). Residue Lys-306 coordinates ATP.

Belongs to the class-I aminoacyl-tRNA synthetase family.

Its subcellular location is the cytoplasm. The enzyme catalyses tRNA(Lys) + L-lysine + ATP = L-lysyl-tRNA(Lys) + AMP + diphosphate. This chain is Lysine--tRNA ligase, found in Brucella melitensis biotype 1 (strain ATCC 23456 / CCUG 17765 / NCTC 10094 / 16M).